The following is a 125-amino-acid chain: Cystatin-like cysteine protease inhibitor EPIC2B (125 aa).

An N-terminal signal peptide occupies residues 1-21; sequence MSFLRPTLALLAVTALVTTSA. Asparagine 45 carries an N-linked (GlcNAc...) asparagine glycan. The short motif at 68 to 72 is the Secondary area of contact element; it reads QVVSG.

It belongs to the cystatin family. In terms of assembly, interacts with the host papain-like cysteine protease PIP1. Interacts with the host papain-like cysteine protease RCR3. Interacts with the host papain-like cysteine protease C14.

The protein resides in the secreted. Its function is as follows. Secreted effector that interacts with and inhibits the pathogenesis-related papain-like cysteine proteases C14, PIP1 and RCR3 of host plants. Inhibition of host proteases by a pathogen extracellular protease inhibitor forms a specific type of defense-counterdefense mechanism between plants and microbial pathogens. In Phytophthora infestans (strain T30-4) (Potato late blight agent), this protein is Cystatin-like cysteine protease inhibitor EPIC2B.